Consider the following 263-residue polypeptide: Hydroxyethylthiazole kinase (263 aa).

Residue M45 participates in substrate binding. 2 residues coordinate ATP: R121 and S167. Substrate is bound at residue G194.

The protein belongs to the Thz kinase family. It depends on Mg(2+) as a cofactor.

It carries out the reaction 5-(2-hydroxyethyl)-4-methylthiazole + ATP = 4-methyl-5-(2-phosphooxyethyl)-thiazole + ADP + H(+). Its pathway is cofactor biosynthesis; thiamine diphosphate biosynthesis; 4-methyl-5-(2-phosphoethyl)-thiazole from 5-(2-hydroxyethyl)-4-methylthiazole: step 1/1. Functionally, catalyzes the phosphorylation of the hydroxyl group of 4-methyl-5-beta-hydroxyethylthiazole (THZ). The sequence is that of Hydroxyethylthiazole kinase from Vibrio parahaemolyticus serotype O3:K6 (strain RIMD 2210633).